A 90-amino-acid chain; its full sequence is Cell division topological specificity factor (90 aa).

This sequence belongs to the MinE family.

In terms of biological role, prevents the cell division inhibition by proteins MinC and MinD at internal division sites while permitting inhibition at polar sites. This ensures cell division at the proper site by restricting the formation of a division septum at the midpoint of the long axis of the cell. The sequence is that of Cell division topological specificity factor from Brucella abortus (strain S19).